Reading from the N-terminus, the 185-residue chain is Ribosome-recycling factor (185 aa).

The protein belongs to the RRF family.

The protein localises to the cytoplasm. Its function is as follows. Responsible for the release of ribosomes from messenger RNA at the termination of protein biosynthesis. May increase the efficiency of translation by recycling ribosomes from one round of translation to another. This is Ribosome-recycling factor from Bacillus mycoides (strain KBAB4) (Bacillus weihenstephanensis).